The primary structure comprises 648 residues: tRNA 5-methylaminomethyl-2-thiouridine biosynthesis bifunctional protein MnmC (648 aa).

The tRNA (mnm(5)s(2)U34)-methyltransferase stretch occupies residues 1-228; sequence MTDRLVPASL…VDDLLVGEYA (228 aa). Residues 252–648 are FAD-dependent cmnm(5)s(2)U34 oxidoreductase; sequence IGAGLAGCAV…LRARRVGRAG (397 aa).

In the N-terminal section; belongs to the methyltransferase superfamily. tRNA (mnm(5)s(2)U34)-methyltransferase family. The protein in the C-terminal section; belongs to the DAO family. The cofactor is FAD.

It is found in the cytoplasm. It catalyses the reaction 5-aminomethyl-2-thiouridine(34) in tRNA + S-adenosyl-L-methionine = 5-methylaminomethyl-2-thiouridine(34) in tRNA + S-adenosyl-L-homocysteine + H(+). In terms of biological role, catalyzes the last two steps in the biosynthesis of 5-methylaminomethyl-2-thiouridine (mnm(5)s(2)U) at the wobble position (U34) in tRNA. Catalyzes the FAD-dependent demodification of cmnm(5)s(2)U34 to nm(5)s(2)U34, followed by the transfer of a methyl group from S-adenosyl-L-methionine to nm(5)s(2)U34, to form mnm(5)s(2)U34. The sequence is that of tRNA 5-methylaminomethyl-2-thiouridine biosynthesis bifunctional protein MnmC from Burkholderia lata (strain ATCC 17760 / DSM 23089 / LMG 22485 / NCIMB 9086 / R18194 / 383).